We begin with the raw amino-acid sequence, 402 residues long: Dual-specificity RNA methyltransferase RlmN (402 aa).

E124 (proton acceptor) is an active-site residue. One can recognise a Radical SAM core domain in the interval 130–370 (DADRGTLCVS…APVRTPRGRD (241 aa)). C137 and C375 are joined by a disulfide. The [4Fe-4S] cluster site is built by C144, C148, and C151. S-adenosyl-L-methionine contacts are provided by residues 199–200 (GE), S231, 253–255 (SLH), and N332. C375 (S-methylcysteine intermediate) is an active-site residue.

The protein belongs to the radical SAM superfamily. RlmN family. [4Fe-4S] cluster serves as cofactor.

It localises to the cytoplasm. The catalysed reaction is adenosine(2503) in 23S rRNA + 2 reduced [2Fe-2S]-[ferredoxin] + 2 S-adenosyl-L-methionine = 2-methyladenosine(2503) in 23S rRNA + 5'-deoxyadenosine + L-methionine + 2 oxidized [2Fe-2S]-[ferredoxin] + S-adenosyl-L-homocysteine. It carries out the reaction adenosine(37) in tRNA + 2 reduced [2Fe-2S]-[ferredoxin] + 2 S-adenosyl-L-methionine = 2-methyladenosine(37) in tRNA + 5'-deoxyadenosine + L-methionine + 2 oxidized [2Fe-2S]-[ferredoxin] + S-adenosyl-L-homocysteine. Functionally, specifically methylates position 2 of adenine 2503 in 23S rRNA and position 2 of adenine 37 in tRNAs. m2A2503 modification seems to play a crucial role in the proofreading step occurring at the peptidyl transferase center and thus would serve to optimize ribosomal fidelity. The chain is Dual-specificity RNA methyltransferase RlmN from Rhizorhabdus wittichii (strain DSM 6014 / CCUG 31198 / JCM 15750 / NBRC 105917 / EY 4224 / RW1) (Sphingomonas wittichii).